The following is an 87-amino-acid chain: Large ribosomal subunit protein bL31B (87 aa).

This sequence belongs to the bacterial ribosomal protein bL31 family. Type B subfamily. Part of the 50S ribosomal subunit.

This is Large ribosomal subunit protein bL31B from Escherichia coli O8 (strain IAI1).